We begin with the raw amino-acid sequence, 340 residues long: Ribosomal RNA large subunit methyltransferase F (340 aa).

This sequence belongs to the methyltransferase superfamily. METTL16/RlmF family.

The protein localises to the cytoplasm. It carries out the reaction adenosine(1618) in 23S rRNA + S-adenosyl-L-methionine = N(6)-methyladenosine(1618) in 23S rRNA + S-adenosyl-L-homocysteine + H(+). Functionally, specifically methylates the adenine in position 1618 of 23S rRNA. This chain is Ribosomal RNA large subunit methyltransferase F, found in Dechloromonas aromatica (strain RCB).